We begin with the raw amino-acid sequence, 171 residues long: UPF0398 protein M6_Spy1399 (171 aa).

It belongs to the UPF0398 family.

This Streptococcus pyogenes serotype M6 (strain ATCC BAA-946 / MGAS10394) protein is UPF0398 protein M6_Spy1399.